A 230-amino-acid chain; its full sequence is Fibrillarin-like rRNA/tRNA 2'-O-methyltransferase (230 aa).

S-adenosyl-L-methionine-binding positions include 89 to 90 (TT), 107 to 108 (EV), 132 to 133 (DA), and 152 to 155 (DISQ).

Belongs to the methyltransferase superfamily. Fibrillarin family. Interacts with nop5. Component of box C/D small ribonucleoprotein (sRNP) particles that contain rpl7ae, FlpA and nop5, plus a guide RNA.

In terms of biological role, involved in pre-rRNA and tRNA processing. Utilizes the methyl donor S-adenosyl-L-methionine to catalyze the site-specific 2'-hydroxyl methylation of ribose moieties in rRNA and tRNA. Site specificity is provided by a guide RNA that base pairs with the substrate. Methylation occurs at a characteristic distance from the sequence involved in base pairing with the guide RNA. This is Fibrillarin-like rRNA/tRNA 2'-O-methyltransferase from Thermoplasma acidophilum (strain ATCC 25905 / DSM 1728 / JCM 9062 / NBRC 15155 / AMRC-C165).